The chain runs to 649 residues: 1,4-alpha-glucan branching enzyme GlgB (649 aa).

Asp-315 functions as the Nucleophile in the catalytic mechanism. Glu-366 serves as the catalytic Proton donor.

Belongs to the glycosyl hydrolase 13 family. GlgB subfamily. In terms of assembly, monomer.

The enzyme catalyses Transfers a segment of a (1-&gt;4)-alpha-D-glucan chain to a primary hydroxy group in a similar glucan chain.. It functions in the pathway glycan biosynthesis; glycogen biosynthesis. In terms of biological role, catalyzes the formation of the alpha-1,6-glucosidic linkages in glycogen by scission of a 1,4-alpha-linked oligosaccharide from growing alpha-1,4-glucan chains and the subsequent attachment of the oligosaccharide to the alpha-1,6 position. This chain is 1,4-alpha-glucan branching enzyme GlgB, found in Ligilactobacillus salivarius (strain UCC118) (Lactobacillus salivarius).